The chain runs to 221 residues: Pyridoxine/pyridoxamine 5'-phosphate oxidase (221 aa).

A disordered region spans residues 1 to 21; the sequence is MDYSDPAELRESYDGAPLDPR. Substrate-binding positions include 10–13 and Lys-68; that span reads RESY. FMN-binding positions include 63-68, 78-79, Arg-84, Lys-85, and Gln-107; these read RTVLLK and FT. Substrate-binding residues include Tyr-125, Arg-129, and Ser-133. FMN-binding positions include 143–144 and Trp-189; that span reads QS. Residue 195-197 participates in substrate binding; the sequence is RMH. FMN is bound at residue Arg-199.

The protein belongs to the pyridoxamine 5'-phosphate oxidase family. In terms of assembly, homodimer. It depends on FMN as a cofactor.

It catalyses the reaction pyridoxamine 5'-phosphate + O2 + H2O = pyridoxal 5'-phosphate + H2O2 + NH4(+). It carries out the reaction pyridoxine 5'-phosphate + O2 = pyridoxal 5'-phosphate + H2O2. It participates in cofactor metabolism; pyridoxal 5'-phosphate salvage; pyridoxal 5'-phosphate from pyridoxamine 5'-phosphate: step 1/1. Its pathway is cofactor metabolism; pyridoxal 5'-phosphate salvage; pyridoxal 5'-phosphate from pyridoxine 5'-phosphate: step 1/1. Catalyzes the oxidation of either pyridoxine 5'-phosphate (PNP) or pyridoxamine 5'-phosphate (PMP) into pyridoxal 5'-phosphate (PLP). This is Pyridoxine/pyridoxamine 5'-phosphate oxidase from Thermobifida fusca (strain YX).